The chain runs to 205 residues: Octanoyltransferase (205 aa).

In terms of domain architecture, BPL/LPL catalytic spans 30 to 205 (NSADELVWLL…ILKKEFYKIF (176 aa)). Residues 68-75 (RGGKHTYH), 140-142 (AFG), and 153-155 (GIA) each bind substrate. Cysteine 171 functions as the Acyl-thioester intermediate in the catalytic mechanism.

It belongs to the LipB family.

It localises to the cytoplasm. The enzyme catalyses octanoyl-[ACP] + L-lysyl-[protein] = N(6)-octanoyl-L-lysyl-[protein] + holo-[ACP] + H(+). It functions in the pathway protein modification; protein lipoylation via endogenous pathway; protein N(6)-(lipoyl)lysine from octanoyl-[acyl-carrier-protein]: step 1/2. Catalyzes the transfer of endogenously produced octanoic acid from octanoyl-acyl-carrier-protein onto the lipoyl domains of lipoate-dependent enzymes. Lipoyl-ACP can also act as a substrate although octanoyl-ACP is likely to be the physiological substrate. This Wolbachia pipientis wMel protein is Octanoyltransferase.